The sequence spans 420 residues: E3 ubiquitin protein ligase DRIP2 (420 aa).

An RING-type zinc finger spans residues 20 to 61 (CPLCDKLLRDATTISECLHTFCRKCIYEKITEDEIESCPVCD). Over residues 113-123 (ISSLVVSTPRV) the composition is skewed to polar residues. 2 disordered regions span residues 113–201 (ISSL…KDVD) and 226–289 (DPKS…TFGD). Over residues 154 to 165 (KKEEEFGDDHVE) the composition is skewed to basic and acidic residues. Polar residues-rich tracts occupy residues 166 to 194 (SASS…SLSN) and 232 to 242 (GNASHNDVQGS). Residues 244–253 (TKTKDHKRKC) show a composition bias toward basic residues. Positions 260-273 (SNNGDPTTSETATL) are enriched in polar residues. A compositionally biased stretch (basic residues) spans 274-284 (KRTRRTRRKRS).

As to quaternary structure, interacts with DREB2A. In terms of processing, auto-ubiquitinated. As to expression, expressed in roots, leaves and flowers.

The catalysed reaction is S-ubiquitinyl-[E2 ubiquitin-conjugating enzyme]-L-cysteine + [acceptor protein]-L-lysine = [E2 ubiquitin-conjugating enzyme]-L-cysteine + N(6)-ubiquitinyl-[acceptor protein]-L-lysine.. It participates in protein modification; protein ubiquitination. Its function is as follows. E3 ubiquitin-protein ligase that acts as a negative regulator of the response to water stress. Mediates ubiquitination and subsequent proteasomal degradation of the drought-induced transcriptional activator DREB2A. Functionally redundant with DRIP1. The chain is E3 ubiquitin protein ligase DRIP2 (DRIP2) from Arabidopsis thaliana (Mouse-ear cress).